Here is a 110-residue protein sequence, read N- to C-terminus: Ribonuclease P protein component 4 (110 aa).

Residues Cys65, Cys68, Cys94, and Cys97 each coordinate Zn(2+).

Belongs to the eukaryotic/archaeal RNase P protein component 4 family. In terms of assembly, consists of a catalytic RNA component and at least 4-5 protein subunits. Requires Zn(2+) as cofactor.

It localises to the cytoplasm. It catalyses the reaction Endonucleolytic cleavage of RNA, removing 5'-extranucleotides from tRNA precursor.. In terms of biological role, part of ribonuclease P, a protein complex that generates mature tRNA molecules by cleaving their 5'-ends. In Methanococcus maripaludis (strain C6 / ATCC BAA-1332), this protein is Ribonuclease P protein component 4.